Consider the following 48-residue polypeptide: uncharacterized protein (48 aa).

Its subcellular location is the plastid. The protein resides in the cyanelle. This is an uncharacterized protein from Cyanophora paradoxa.